A 696-amino-acid polypeptide reads, in one-letter code: Glutamate-rich protein 6B (696 aa).

Positions 1–10 (MSAENNQLSG) are enriched in polar residues. Positions 1–105 (MSAENNQLSG…EYLEKAGYLE (105 aa)) are disordered. Acidic residues-rich tracts occupy residues 32–44 (EDTE…ESLQ) and 54–72 (ESLE…EEEE). Residues 73–91 (YLGKEEYLKEEEYLGKEEH) are compositionally biased toward basic and acidic residues.

The protein belongs to the ERICH6 family.

This chain is Glutamate-rich protein 6B (ERICH6B), found in Homo sapiens (Human).